The following is a 362-amino-acid chain: Histidinol-phosphate aminotransferase (362 aa).

Position 218 is an N6-(pyridoxal phosphate)lysine (Lys218).

Belongs to the class-II pyridoxal-phosphate-dependent aminotransferase family. Histidinol-phosphate aminotransferase subfamily. As to quaternary structure, homodimer. The cofactor is pyridoxal 5'-phosphate.

The catalysed reaction is L-histidinol phosphate + 2-oxoglutarate = 3-(imidazol-4-yl)-2-oxopropyl phosphate + L-glutamate. It participates in amino-acid biosynthesis; L-histidine biosynthesis; L-histidine from 5-phospho-alpha-D-ribose 1-diphosphate: step 7/9. This is Histidinol-phosphate aminotransferase from Xanthomonas campestris pv. campestris (strain 8004).